The chain runs to 68 residues: MATGTVKWFNDAKGFGFITQDGGGEDVFCHHSAINMDGFRTLQEGQKVEFEVTRGPKGLQAQNVRSIP.

The region spanning 4–64 (GTVKWFNDAK…GPKGLQAQNV (61 aa)) is the CSD domain.

Its subcellular location is the cytoplasm. The sequence is that of Cold shock-like protein CspA (cspA) from Stigmatella aurantiaca (strain DW4/3-1).